We begin with the raw amino-acid sequence, 338 residues long: MTKKYNIAVIGATGNVGRETLNILAERNFPINKIYAVASNNSIGKKVSFGEQVLQISSLDDLDFEEIDIAFFSAGSEVSKKFIPIAIVKNCMVIDKSSFFRLSEDIPLIVPEANLSTLKDFAIKNIISNPNCIAIPLAVVLKPLDNEISIKRVVISTYQSVSGAGKAGMDELYDQTKSKYIFEEKSPNIFPKQIAFNLFPHIGDLNKDGYTSEESKIALELQKIIGDHLKVSVTSVRVPVFVGHSISVNIEFSSKVDAKEVEEILEDADGVVMISQTKDLAYISPTEVVGEDAVYVSRIRDDESKENAINLWITCDNLRKGAALNSVQIAEELIKTYL.

Residues 13–16 (TGNV) and 41–42 (NS) each bind NADP(+). Position 101 (Arg101) interacts with phosphate. Cys132 functions as the Acyl-thioester intermediate in the catalytic mechanism. A substrate-binding site is contributed by Gln159. An NADP(+)-binding site is contributed by 162 to 163 (SG). Residue Lys216 coordinates phosphate. Arg237 contributes to the substrate binding site. His244 (proton acceptor) is an active-site residue. Residue Asn317 coordinates NADP(+).

Belongs to the aspartate-semialdehyde dehydrogenase family. In terms of assembly, homodimer.

The catalysed reaction is L-aspartate 4-semialdehyde + phosphate + NADP(+) = 4-phospho-L-aspartate + NADPH + H(+). It functions in the pathway amino-acid biosynthesis; L-lysine biosynthesis via DAP pathway; (S)-tetrahydrodipicolinate from L-aspartate: step 2/4. Its pathway is amino-acid biosynthesis; L-methionine biosynthesis via de novo pathway; L-homoserine from L-aspartate: step 2/3. The protein operates within amino-acid biosynthesis; L-threonine biosynthesis; L-threonine from L-aspartate: step 2/5. In terms of biological role, catalyzes the NADPH-dependent formation of L-aspartate-semialdehyde (L-ASA) by the reductive dephosphorylation of L-aspartyl-4-phosphate. The polypeptide is Aspartate-semialdehyde dehydrogenase (Rickettsia bellii (strain RML369-C)).